The primary structure comprises 523 residues: Pituitary adenylate cyclase-activating polypeptide type I receptor (523 aa).

A signal peptide spans 1–19 (MARVLQLSLTALLLPVAIA). Over 20–151 (MHSDCIFKKE…SGDQDYYYLS (132 aa)) the chain is Extracellular. Cystine bridges form between cysteine 33–cysteine 62, cysteine 53–cysteine 117, and cysteine 76–cysteine 133. Residues asparagine 47, asparagine 59, and asparagine 116 are each glycosylated (N-linked (GlcNAc...) asparagine). The important for ADCYAP1/PACAP ligand binding and specificity stretch occupies residues 124 to 138 (EPFPHYFDACGFDDY). The segment at 124-138 (EPFPHYFDACGFDDY) is important for ligand binding and specificity. The helical transmembrane segment at 152 to 176 (VKALYTVGYSTSLATLTTAMVILCR) threads the bilayer. At 177–186 (FRKLHCTRNF) the chain is on the cytoplasmic side. Residues 187–207 (IHMNLFVSFMLRAISVFIKDW) form a helical membrane-spanning segment. Residues 208–222 (ILYAEQDSSHCFVST) are Extracellular-facing. Residues 223–248 (VECKAVMVFFHYCVVSNYFWLFIEGL) form a helical membrane-spanning segment. An intrachain disulfide couples cysteine 225 to cysteine 295. Over 249-266 (YLFTLLVETFFPERRYFY) the chain is Cytoplasmic. A helical membrane pass occupies residues 267–289 (WYTIIGWGTPTVCVTVWAVLRLY). Over 290 to 301 (FDDAGCWDMNDS) the chain is Extracellular. The helical transmembrane segment at 302-328 (TALWWVIKGPVVGSIMVNFVLFIGIII) threads the bilayer. The Cytoplasmic portion of the chain corresponds to 329–346 (ILVQKLQSPDMGGNESSI). A helical transmembrane segment spans residues 347–429 (YLTNLRLRVP…HYTVFAFSPE (83 aa)). Topologically, residues 430 to 434 (NVSKR) are extracellular. A helical membrane pass occupies residues 435-458 (ERLVFELGLGSFQGFVVAVLYCFL). Topologically, residues 459–523 (NGEVQAEIKR…SSLPADNLAT (65 aa)) are cytoplasmic. Phosphoserine is present on residues serine 489 and serine 502.

Belongs to the G-protein coupled receptor 2 family. As to quaternary structure, interacts with maxadilan, a vasodilator peptide from Lutzomyia longipalpis saliva; the interaction results in ADCYAP1R1 activation. As to expression, hypothalamus, anterior pituitary, adrenal medulla, testicular germ cells.

It is found in the cell membrane. Functionally, g protein-coupled receptor activated by the neuropeptide pituitary adenylate cyclase-activating polypeptide (ADCYAP1/PACAP). Binds both PACAP27 and PACAP38 bioactive peptides. Ligand binding causes a conformation change that triggers signaling via guanine nucleotide-binding proteins (G proteins) and modulates the activity of downstream effectors. Activates cAMP-dependent pathway. May regulate the release of adrenocorticotropin, luteinizing hormone, growth hormone, prolactin, epinephrine, and catecholamine. May play a role in spermatogenesis and sperm motility. Causes smooth muscle relaxation and secretion in the gastrointestinal tract. In Rattus norvegicus (Rat), this protein is Pituitary adenylate cyclase-activating polypeptide type I receptor.